The sequence spans 138 residues: 6,7-dimethyl-8-ribityllumazine synthase (138 aa).

5-amino-6-(D-ribitylamino)uracil contacts are provided by residues F13, 45–47 (VFD), and 69–71 (AVI). Residue 74-75 (AT) participates in (2S)-2-hydroxy-3-oxobutyl phosphate binding. The Proton donor role is filled by H77. A 5-amino-6-(D-ribitylamino)uracil-binding site is contributed by L102. Position 117 (R117) interacts with (2S)-2-hydroxy-3-oxobutyl phosphate.

This sequence belongs to the DMRL synthase family.

It carries out the reaction (2S)-2-hydroxy-3-oxobutyl phosphate + 5-amino-6-(D-ribitylamino)uracil = 6,7-dimethyl-8-(1-D-ribityl)lumazine + phosphate + 2 H2O + H(+). It participates in cofactor biosynthesis; riboflavin biosynthesis; riboflavin from 2-hydroxy-3-oxobutyl phosphate and 5-amino-6-(D-ribitylamino)uracil: step 1/2. Catalyzes the formation of 6,7-dimethyl-8-ribityllumazine by condensation of 5-amino-6-(D-ribitylamino)uracil with 3,4-dihydroxy-2-butanone 4-phosphate. This is the penultimate step in the biosynthesis of riboflavin. The polypeptide is 6,7-dimethyl-8-ribityllumazine synthase (Methanobrevibacter smithii (strain ATCC 35061 / DSM 861 / OCM 144 / PS)).